We begin with the raw amino-acid sequence, 410 residues long: Lissencephaly-1 homolog A (410 aa).

The region spanning 7–39 is the LisH domain; sequence QRDELNRAIADYLRSNGYEEAYSVFKKEAELDM. Residues 56–83 adopt a coiled-coil conformation; it reads TSVIRLQKKVMELESKLNEAKEEINIGG. 7 WD repeats span residues 106–145, 148–187, 190–229, 232–271, 274–333, 336–375, and 378–410; these read GHRS…FERT, GHTD…CIRT, GHDH…CVKT, GHRE…CKAE, EHEH…CLMT, GHDN…CTKT, and AHEH…WECR.

Belongs to the WD repeat LIS1/nudF family. Can self-associate. Component of the cytosolic PAF-AH (I) heterotetrameric enzyme, which is composed of PAFAH1B1 (beta), PAFAH1B2 (alpha2) and PAFAH1B3 (alpha1) subunits. The catalytic activity of the enzyme resides in the alpha1 (PAFAH1B3) and alpha2 (PAFAH1B2) subunits, whereas the beta subunit (PAFAH1B1) has regulatory activity. Trimer formation is not essential for the catalytic activity. Interacts with dynein, dynactin, nde1 and ndel1.

The protein localises to the cytoplasm. It is found in the cytoskeleton. It localises to the microtubule organizing center. The protein resides in the centrosome. Its function is as follows. Regulatory subunit (beta subunit) of the cytosolic type I platelet-activating factor (PAF) acetylhydrolase (PAF-AH (I)), an enzyme that catalyzes the hydrolyze of the acetyl group at the sn-2 position of PAF and its analogs and participates in PAF inactivation. Regulates the PAF-AH (I) activity in a catalytic dimer composition-dependent manner. Positively regulates the activity of the minus-end directed microtubule motor protein dynein. May enhance dynein-mediated microtubule sliding by targeting dynein to the microtubule plus end. Required for several dynein- and microtubule-dependent processes such as the maintenance of Golgi integrity, the peripheral transport of microtubule fragments and the coupling of the nucleus and centrosome. May be required for proliferation of neuronal precursors and neuronal migration. In Danio rerio (Zebrafish), this protein is Lissencephaly-1 homolog A (pafah1b1a).